We begin with the raw amino-acid sequence, 180 residues long: Putative adenylate kinase (180 aa).

ATP-binding residues include G10, G12, K13, T14, and T15. Residues 30 to 50 (SVKELALSRGIGERVSDEIEI) are NMP. Positions 99 to 109 (ARGYSKKKLAE) are LID. ATP is bound by residues R100 and K138.

It belongs to the adenylate kinase family. AK6 subfamily. As to quaternary structure, interacts with uS11. Not a structural component of 40S pre-ribosomes, but transiently interacts with them by binding to uS11.

It carries out the reaction AMP + ATP = 2 ADP. The enzyme catalyses ATP + H2O = ADP + phosphate + H(+). Broad-specificity nucleoside monophosphate (NMP) kinase that catalyzes the reversible transfer of the terminal phosphate group between nucleoside triphosphates and monophosphates. Also has ATPase activity. Involved in the late maturation steps of the 30S ribosomal particles, specifically 16S rRNA maturation. While NMP activity is not required for ribosome maturation, ATPase activity is. Associates transiently with small ribosomal subunit protein uS11. ATP hydrolysis breaks the interaction with uS11. May temporarily remove uS11 from the ribosome to enable a conformational change of the ribosomal RNA that is needed for the final maturation step of the small ribosomal subunit. The protein is Putative adenylate kinase of Thermococcus onnurineus (strain NA1).